The chain runs to 284 residues: Bifunctional protein FolD 2 (284 aa).

NADP(+) is bound by residues 164–166, Ser-189, and Ile-230; that span reads GRG.

This sequence belongs to the tetrahydrofolate dehydrogenase/cyclohydrolase family. In terms of assembly, homodimer.

It carries out the reaction (6R)-5,10-methylene-5,6,7,8-tetrahydrofolate + NADP(+) = (6R)-5,10-methenyltetrahydrofolate + NADPH. It catalyses the reaction (6R)-5,10-methenyltetrahydrofolate + H2O = (6R)-10-formyltetrahydrofolate + H(+). It participates in one-carbon metabolism; tetrahydrofolate interconversion. In terms of biological role, catalyzes the oxidation of 5,10-methylenetetrahydrofolate to 5,10-methenyltetrahydrofolate and then the hydrolysis of 5,10-methenyltetrahydrofolate to 10-formyltetrahydrofolate. In Desulfitobacterium hafniense (strain Y51), this protein is Bifunctional protein FolD 2.